The sequence spans 556 residues: Thermosome subunit beta (556 aa).

The interval leucine 530–methionine 556 is disordered. Gly residues predominate over residues glycine 540–methionine 556.

It belongs to the TCP-1 chaperonin family. Forms an oligomeric complex of eight-membered rings.

Molecular chaperone; binds unfolded polypeptides in vitro, and has a weak ATPase activity. In Halobacterium salinarum (strain ATCC 700922 / JCM 11081 / NRC-1) (Halobacterium halobium), this protein is Thermosome subunit beta (thsB).